We begin with the raw amino-acid sequence, 371 residues long: tRNA-specific 2-thiouridylase MnmA (371 aa).

ATP contacts are provided by residues 24–31 (AMSGGVDS) and Leu50. The active-site Nucleophile is Cys119. A disulfide bridge connects residues Cys119 and Cys215. Gly143 lines the ATP pocket. The segment at 165–167 (KDQ) is interaction with tRNA. The active-site Cysteine persulfide intermediate is the Cys215.

This sequence belongs to the MnmA/TRMU family.

The protein localises to the cytoplasm. The catalysed reaction is S-sulfanyl-L-cysteinyl-[protein] + uridine(34) in tRNA + AH2 + ATP = 2-thiouridine(34) in tRNA + L-cysteinyl-[protein] + A + AMP + diphosphate + H(+). Functionally, catalyzes the 2-thiolation of uridine at the wobble position (U34) of tRNA, leading to the formation of s(2)U34. This chain is tRNA-specific 2-thiouridylase MnmA, found in Neorickettsia sennetsu (strain ATCC VR-367 / Miyayama) (Ehrlichia sennetsu).